Here is a 1097-residue protein sequence, read N- to C-terminus: Nitric oxide synthase-like protein (1097 aa).

Cysteine 77 provides a ligand contact to heme b. L-arginine-binding residues include glutamine 140, tryptophan 249, tyrosine 250, glutamate 254, and asparagine 259. (6R)-L-erythro-5,6,7,8-tetrahydrobiopterin-binding residues include tryptophan 340 and phenylalanine 353. Heme b is bound at residue tyrosine 368. Residues 387–410 are calmodulin-binding; the sequence is KRPINRKFHFKQIARAVKFTSKLF. The Flavodoxin-like domain maps to 420–615; that stretch reads ATVLYATETG…AFRKWASSVF (196 aa). FMN is bound by residues 426 to 430 and 561 to 592; these read TETGK and VFAL…ERIH. The FAD-binding FR-type domain occupies 669-914; sequence KQFVSCTVKA…IRSAPNFHLP (246 aa). FAD is bound by residues 704–715 and 847–857; these read YNPGDHVGIIAC and LQPRFYSISSS. NADP(+) contacts are provided by residues 922-940 and 1019-1034; these read ILIG…WHHR and GAHF…AEDV.

This sequence belongs to the NOS family. Requires heme b as cofactor. FAD is required as a cofactor. FMN serves as cofactor.

The enzyme catalyses 2 L-arginine + 3 NADPH + 4 O2 + H(+) = 2 L-citrulline + 2 nitric oxide + 3 NADP(+) + 4 H2O. In terms of biological role, produces nitric oxide (NO) which is a messenger molecule with diverse functions throughout the body. This Bombyx mori (Silk moth) protein is Nitric oxide synthase-like protein.